Reading from the N-terminus, the 388-residue chain is Dual-specificity RNA methyltransferase RlmN (388 aa).

The active-site Proton acceptor is Glu-109. Residues 115 to 354 (EDDRATLCVS…TIVRKTRGDD (240 aa)) enclose the Radical SAM core domain. The cysteines at positions 122 and 359 are disulfide-linked. Residues Cys-129, Cys-133, and Cys-136 each contribute to the [4Fe-4S] cluster site. S-adenosyl-L-methionine-binding positions include 183–184 (GE), Ser-215, 237–239 (SLH), and Asn-316. Cys-359 serves as the catalytic S-methylcysteine intermediate.

Belongs to the radical SAM superfamily. RlmN family. It depends on [4Fe-4S] cluster as a cofactor.

Its subcellular location is the cytoplasm. The enzyme catalyses adenosine(2503) in 23S rRNA + 2 reduced [2Fe-2S]-[ferredoxin] + 2 S-adenosyl-L-methionine = 2-methyladenosine(2503) in 23S rRNA + 5'-deoxyadenosine + L-methionine + 2 oxidized [2Fe-2S]-[ferredoxin] + S-adenosyl-L-homocysteine. It catalyses the reaction adenosine(37) in tRNA + 2 reduced [2Fe-2S]-[ferredoxin] + 2 S-adenosyl-L-methionine = 2-methyladenosine(37) in tRNA + 5'-deoxyadenosine + L-methionine + 2 oxidized [2Fe-2S]-[ferredoxin] + S-adenosyl-L-homocysteine. Its function is as follows. Specifically methylates position 2 of adenine 2503 in 23S rRNA and position 2 of adenine 37 in tRNAs. m2A2503 modification seems to play a crucial role in the proofreading step occurring at the peptidyl transferase center and thus would serve to optimize ribosomal fidelity. The polypeptide is Dual-specificity RNA methyltransferase RlmN (Salmonella typhi).